The primary structure comprises 1325 residues: Cellulose synthase 1 operon protein C (1325 aa).

The first 30 residues, 1-30 (MNRRYVFSLSAGLLASSCMGAIMPVPVARA), serve as a signal peptide directing secretion. TPR repeat units follow at residues 50-83 (RQILLQQARFWLQQQQYDNARQALQNAQRIAPDA), 85-117 (DVLEVQGEYQTAMGNREAAADTLRHLQEVAPGS), 292-325 (AGLARQAGFQQLNSGRLSAAEQSFQSALQINSHD), 326-359 (ADSLGGMGLVSMRQGDAAEARRYFQEAMAADPKT), 406-439 (TGATLMLADLQRTTGQIDASEQEYRSVLARDPNN), 558-591 (NDAATRRLLSGLSPEDYSPAIRSIAEEMQIKEDL), 702-735 (MGIAVAQSDLLNQRGDQAQAYDHLAPALRADPEA), and 737-769 (SPKLALARLYNGEGKSSKALDIDLAVLRHNPQD). The interval 838 to 886 (VEGSRSASGPAATEEDALAPPSSNPFRHHGYGRQTELGAPVTGGSYSME) is disordered.

It belongs to the AcsC/BcsC family.

The protein localises to the cell outer membrane. Its pathway is glycan metabolism; bacterial cellulose biosynthesis. In terms of biological role, required for maximal bacterial cellulose synthesis. It may be involved in the formation of a membrane complex for extrusion of the cellulose product. The protein is Cellulose synthase 1 operon protein C (bcsCI) of Komagataeibacter xylinus (Gluconacetobacter xylinus).